We begin with the raw amino-acid sequence, 329 residues long: Sulfate-binding protein (329 aa).

The first 19 residues, 1–19 (MKKWGVGFTLLLASTSILA), serve as a signal peptide directing secretion.

Belongs to the prokaryotic sulfate-binding protein family.

It localises to the periplasm. Its function is as follows. This protein specifically binds sulfate and is involved in its transmembrane transport. This is Sulfate-binding protein (sbp) from Salmonella typhimurium (strain LT2 / SGSC1412 / ATCC 700720).